We begin with the raw amino-acid sequence, 354 residues long: Methylthioribose-1-phosphate isomerase (354 aa).

Residues 58–60 (RGA), Arg-101, and Gln-204 contribute to the substrate site. The active-site Proton donor is Asp-245. Substrate is bound at residue 255–256 (NK).

This sequence belongs to the eIF-2B alpha/beta/delta subunits family. MtnA subfamily.

It carries out the reaction 5-(methylsulfanyl)-alpha-D-ribose 1-phosphate = 5-(methylsulfanyl)-D-ribulose 1-phosphate. The protein operates within amino-acid biosynthesis; L-methionine biosynthesis via salvage pathway; L-methionine from S-methyl-5-thio-alpha-D-ribose 1-phosphate: step 1/6. Its function is as follows. Catalyzes the interconversion of methylthioribose-1-phosphate (MTR-1-P) into methylthioribulose-1-phosphate (MTRu-1-P). The sequence is that of Methylthioribose-1-phosphate isomerase from Xanthomonas oryzae pv. oryzae (strain MAFF 311018).